Consider the following 330-residue polypeptide: uncharacterized protein (330 aa).

Positions 96–256 (AALEFDFTDL…LMLAALRKKL (161 aa)) constitute a JmjC domain. Positions 145, 147, and 224 each coordinate Fe cation.

It belongs to the ROX family. Requires Fe(2+) as cofactor.

This is an uncharacterized protein from Bacillus subtilis (strain 168).